A 333-amino-acid polypeptide reads, in one-letter code: tRNA N6-adenosine threonylcarbamoyltransferase (333 aa).

The Fe cation site is built by His-111 and His-115. Substrate-binding positions include 134–138, Asp-167, Gly-180, and Asn-272; that span reads LVSGG. A Fe cation-binding site is contributed by Asp-300.

The protein belongs to the KAE1 / TsaD family. Fe(2+) is required as a cofactor.

The protein resides in the cytoplasm. It carries out the reaction L-threonylcarbamoyladenylate + adenosine(37) in tRNA = N(6)-L-threonylcarbamoyladenosine(37) in tRNA + AMP + H(+). Its function is as follows. Required for the formation of a threonylcarbamoyl group on adenosine at position 37 (t(6)A37) in tRNAs that read codons beginning with adenine. Is involved in the transfer of the threonylcarbamoyl moiety of threonylcarbamoyl-AMP (TC-AMP) to the N6 group of A37, together with TsaE and TsaB. TsaD likely plays a direct catalytic role in this reaction. The chain is tRNA N6-adenosine threonylcarbamoyltransferase from Hamiltonella defensa subsp. Acyrthosiphon pisum (strain 5AT).